A 577-amino-acid polypeptide reads, in one-letter code: Leucine-rich repeat protein soc-2 homolog (577 aa).

Composition is skewed to basic and acidic residues over residues 1–10 and 33–48; these read MRRTKGRTDS and STAH…EAKK. A disordered region spans residues 1–71; that stretch reads MRRTKGRTDS…PTVKKRSTPS (71 aa). 20 LRR repeats span residues 87–109, 110–131, 133–155, 156–177, 179–201, 202–223, 225–246, 248–269, 271–292, 294–315, 318–339, 342–363, 366–387, 389–410, 412–434, 435–456, 458–479, 481–502, 504–526, and 528–549; these read GATR…KELT, SLRE…VGLL, NLET…VKLT, KLKV…IYKL, TLTT…GNLK, LLER…IGQL, HLVT…IGNC, HMTS…IGRL, AMTR…LANC, GIDE…LLSS, NLTS…PPKQ, QVNT…VFNK, YLSK…FGSW, SLVE…IQWL, NLEV…GALR, KLRV…IEYL, SLER…IGYL, SVTY…IGNM, SLEQ…LVLC, and SLQI…IVAG.

Belongs to the SHOC2 family.

Its function is as follows. Acts as a Ras effector and participates in MAPK pathway activation. Probably acts as a scaffolding protein in a protein phosphatase complex that specifically dephosphorylates Raf kinase and stimulate Raf activity at specialized signaling complexes upon Ras activation. This chain is Leucine-rich repeat protein soc-2 homolog, found in Nematostella vectensis (Starlet sea anemone).